The primary structure comprises 359 residues: ATP synthase subunit gamma, chloroplastic (359 aa).

The transit peptide at 1–35 (MSCSHLSTAWSSSALASSASTTRRRSPPRSGLLVR) directs the protein to the chloroplast. C124 is an active-site residue. An intrachain disulfide couples C234 to C240.

Belongs to the ATPase gamma chain family. F-type ATPases have 2 components, CF(1) - the catalytic core - and CF(0) - the membrane proton channel. CF(1) has five subunits: alpha(3), beta(3), gamma(1), delta(1), epsilon(1). CF(0) has four main subunits: a, b, b' and c.

The protein localises to the plastid. Its subcellular location is the chloroplast thylakoid membrane. Produces ATP from ADP in the presence of a proton gradient across the membrane. The gamma chain is believed to be important in regulating ATPase activity and the flow of protons through the CF(0) complex. In terms of biological role, inceptin is a proteolytic fragment produced by insect larvae that previously ingested the protein. This peptide mediate plant perception of herbivory through the induction of volatile, phenylpropanoid and protease inhibitor defenses such as ethylene, jasmonic acid and salicylic acid for example. This chain is ATP synthase subunit gamma, chloroplastic, found in Zea mays (Maize).